Here is a 428-residue protein sequence, read N- to C-terminus: Inward rectifier potassium channel 2 (428 aa).

At 1–81 the chain is on the cytoplasmic side; it reads MGSVRTNRYS…IFTTCVDIRW (81 aa). S-nitrosocysteine is present on cysteine 76. The chain crosses the membrane as a helical span at residues 82 to 106; that stretch reads RWMLVIFCLAFVLSWLFFGCVFWLI. The Extracellular segment spans residues 107-128; the sequence is ALLHGDLDTSKVSKACVSEVNS. The helical; Pore-forming intramembrane region spans 129-140; sequence FTAAFLFSIETQ. Positions 141–147 form an intramembrane region, pore-forming; it reads TTIGYGF. Positions 142-147 match the Selectivity filter motif; the sequence is TIGYGF. Residues 148 to 156 are Extracellular-facing; the sequence is RCVTDECPI. A helical membrane pass occupies residues 157–178; it reads AVFMVVFQSIVGCIIDAFIIGA. Over 179 to 428 the chain is Cytoplasmic; the sequence is VMAKMAKPKK…PRPLRRESEI (250 aa). The segment at 181-208 is polyphosphoinositide (PIP2)-binding; the sequence is AKMAKPKKRNETLVFSHNAVIAMRDGKL. A disordered region spans residues 383–428; that stretch reads TSKEEEEDSENGVPESTSTDSPPGIDLHNQASVPLEPRPLRRESEI. A PDZ-binding motif is present at residues 426–428; the sequence is SEI.

The protein belongs to the inward rectifier-type potassium channel (TC 1.A.2.1) family. KCNJ2 subfamily. As to quaternary structure, homotetramer. Homomultimeric and heteromultimeric association with KCNJ4/Kir2.3. Can form heteromeric channels with Kir2.6/KCNJ18. Associates, via its PDZ-recognition domain, with a complex containing LIN7A, LIN7B, LIN7C, DLG1, CASK and APBA1. In terms of processing, S-nitrosylation increases the open probability and inward rectifying currents. In terms of tissue distribution, prominently expressed in the central nervous system. Also found in other excitable tissues such as heart and skeletal muscle.

It localises to the cell membrane. It is found in the sarcolemma. Its subcellular location is the T-tubule. The enzyme catalyses K(+)(in) = K(+)(out). With respect to regulation, activated by phosphatidylinositol 4,5 biphosphate (PtdIns(4,5)P2). In terms of biological role, inward rectifier potassium channels are characterized by a greater tendency to allow potassium to flow into the cell rather than out of it. Their voltage dependence is regulated by the concentration of extracellular potassium; as external potassium is raised, the voltage range of the channel opening shifts to more positive voltages. The inward rectification is mainly due to the blockage of outward current by internal magnesium. Can be blocked by extracellular barium and cesium. Probably participates in establishing action potential waveform and excitability of neuronal and muscle tissues. The sequence is that of Inward rectifier potassium channel 2 (Kcnj2) from Mus musculus (Mouse).